We begin with the raw amino-acid sequence, 196 residues long: Phosphatidyl-N-methylethanolamine N-methyltransferase (196 aa).

Residue Met-1 is a topological domain, lumenal. The helical intramembrane region spans 2 to 28 (AIFEINNSFLICAVSIALNPLLWNIAA). Residues 29–40 (RSEYNHKTLTKL) are Lumenal-facing. The chain crosses the membrane as a helical span at residues 41–62 (ANGDSKKACYMLAACIFVAGIV). Residues 63–89 (RDLIYQNALKQQPTLGIFMNPLVQGIA) lie on the Cytoplasmic side of the membrane. A helical membrane pass occupies residues 90–110 (KLIFCFGSVLVLSSMYKLGLV). 94 to 96 (CFG) contacts S-adenosyl-L-methionine. Over 111–153 (GTYLGDYFGFLLPERVSGFPFNVNDNPMYNGSTLCFLSTALRY) the chain is Lumenal. The chain crosses the membrane as a helical span at residues 154–174 (GKVAGLLLTLEVFFVYRIALK). Residues 175-196 (FEEPFTAKIYAARDSKQAKKSE) lie on the Cytoplasmic side of the membrane. 176–177 (EE) is a binding site for S-adenosyl-L-methionine.

The protein belongs to the class VI-like SAM-binding methyltransferase superfamily. PEMT/PEM2 methyltransferase family.

It localises to the endoplasmic reticulum membrane. Its subcellular location is the mitochondrion membrane. The enzyme catalyses a 1,2-diacyl-sn-glycero-3-phospho-N-methylethanolamine + S-adenosyl-L-methionine = a 1,2-diacyl-sn-glycero-3-phospho-N,N-dimethylethanolamine + S-adenosyl-L-homocysteine + H(+). It catalyses the reaction a 1,2-diacyl-sn-glycero-3-phospho-N,N-dimethylethanolamine + S-adenosyl-L-methionine = a 1,2-diacyl-sn-glycero-3-phosphocholine + S-adenosyl-L-homocysteine + H(+). Its pathway is phospholipid metabolism; phosphatidylcholine biosynthesis. In terms of biological role, catalyzes the second two steps of the methylation pathway of phosphatidylcholine biosynthesis, the SAM-dependent methylation of phosphatidylmonomethylethanolamine (PMME) to phosphatidyldimethylethanolamine (PDME) and of PDME to phosphatidylcholine (PC). The polypeptide is Phosphatidyl-N-methylethanolamine N-methyltransferase (Schizosaccharomyces pombe (strain 972 / ATCC 24843) (Fission yeast)).